The following is a 370-amino-acid chain: Cobalt-precorrin-5B C(1)-methyltransferase (370 aa).

The protein belongs to the CbiD family.

It carries out the reaction Co-precorrin-5B + S-adenosyl-L-methionine = Co-precorrin-6A + S-adenosyl-L-homocysteine. It participates in cofactor biosynthesis; adenosylcobalamin biosynthesis; cob(II)yrinate a,c-diamide from sirohydrochlorin (anaerobic route): step 6/10. Its function is as follows. Catalyzes the methylation of C-1 in cobalt-precorrin-5B to form cobalt-precorrin-6A. The chain is Cobalt-precorrin-5B C(1)-methyltransferase from Prochlorococcus marinus (strain MIT 9215).